A 102-amino-acid polypeptide reads, in one-letter code: NADH-quinone oxidoreductase subunit K 2 (102 aa).

Transmembrane regions (helical) follow at residues 1–21 (MIVPLLHILILAGILFVLGLV), 30–50 (IIMMLIGIEIMLNAAMLAFVG), and 65–85 (LMIMAMTSAEVSLALALVVYL).

This sequence belongs to the complex I subunit 4L family. In terms of assembly, NDH-1 is composed of 14 different subunits. Subunits NuoA, H, J, K, L, M, N constitute the membrane sector of the complex.

Its subcellular location is the cell inner membrane. It carries out the reaction a quinone + NADH + 5 H(+)(in) = a quinol + NAD(+) + 4 H(+)(out). Functionally, NDH-1 shuttles electrons from NADH, via FMN and iron-sulfur (Fe-S) centers, to quinones in the respiratory chain. The immediate electron acceptor for the enzyme in this species is believed to be ubiquinone. Couples the redox reaction to proton translocation (for every two electrons transferred, four hydrogen ions are translocated across the cytoplasmic membrane), and thus conserves the redox energy in a proton gradient. The sequence is that of NADH-quinone oxidoreductase subunit K 2 from Geotalea daltonii (strain DSM 22248 / JCM 15807 / FRC-32) (Geobacter daltonii).